The chain runs to 704 residues: Polyribonucleotide nucleotidyltransferase (704 aa).

Mg(2+) is bound by residues Asp487 and Asp493. One can recognise a KH domain in the interval 554–613 (PRLLTIKIHPDKIREVIGKGGSTIQAITKETGTQIDIQDDGTIIIASVNAIAAQAAKSRI). The S1 motif domain maps to 623-691 (GRIYEGKVAK…KQGRIRLSIK (69 aa)).

It belongs to the polyribonucleotide nucleotidyltransferase family. Component of the RNA degradosome, which is a multiprotein complex involved in RNA processing and mRNA degradation. Mg(2+) serves as cofactor.

Its subcellular location is the cytoplasm. The catalysed reaction is RNA(n+1) + phosphate = RNA(n) + a ribonucleoside 5'-diphosphate. In terms of biological role, involved in mRNA degradation. Catalyzes the phosphorolysis of single-stranded polyribonucleotides processively in the 3'- to 5'-direction. The chain is Polyribonucleotide nucleotidyltransferase from Xanthomonas axonopodis pv. citri (strain 306).